Reading from the N-terminus, the 512-residue chain is MSMTICSNTPGAYPEIGAYNEVDKQLESSGFSSDSSLILNKPEVRQYWSSVSSHISRSGDVFTNDKEKISSSIGEDAMDIDASPSLIEKYNSFPTRKILPEQDEFENDVEDDASSSLKEKSQGSCEIEIASEISSEILNGTSADGNSEFHDFAEPPPSQNESVALSFSQSNDLDFLNNPSGSGSSNDINRSTSSISLPRHVSLDFNVYNSLCLTNEVTASESHNVAKFHLGKKNKKSLLPRWKTIEMYGEVVKKTQDIYSNFQYAQYILRVGLDTEKLHELVKELEDESNSFSVDSLKEYLVNDAKVILKKLSAVGYPDAQYLLGDAYSSGVFGKIKNRRAFLLFSAAAKRMHIESVYRTAICYECGLGVTRNAPKAVNFLTFAATKNHPAAMYKLGVYSYHGLMGLPDDILTKMDGYRWLRRATSMASSFVCGAPFELANIYMTGYKDLIISDPDYAMALYEKAAALGHTESARILEDARRSGGFVSRGHPPSAQKYHKTSHEAVAAKKLI.

Over residues 101–113 the composition is skewed to acidic residues; that stretch reads EQDEFENDVEDDA. Disordered stretches follow at residues 101 to 122 and 144 to 164; these read EQDE…EKSQ and DGNS…ESVA. 4 Sel1-like repeats span residues 318 to 353, 354 to 389, 390 to 429, and 433 to 470; these read PDAQ…KRMH, IESV…TKNH, PAAM…SMAS, and CGAP…ALGH.

Belongs to the SKT5 family.

Its subcellular location is the cytoplasm. It localises to the cytoplasmic granule membrane. Its function is as follows. Required for the activation of chitin synthase III (CHS3) activity during the sporulation process. The sequence is that of Protein SHC1 (SHC1) from Saccharomyces cerevisiae (strain ATCC 204508 / S288c) (Baker's yeast).